The sequence spans 769 residues: Dolichyl-phosphate-mannose--protein mannosyltransferase 2 (769 aa).

The disordered stretch occupies residues methionine 1–threonine 44. Asparagine 8 is a glycosylation site (N-linked (GlcNAc...) asparagine). The chain crosses the membrane as a helical span at residues serine 59 to valine 79. Residue asparagine 132 is glycosylated (N-linked (GlcNAc...) asparagine). Helical transmembrane passes span methionine 152 to phenylalanine 169, phenylalanine 176 to tyrosine 194, and phenylalanine 200 to phenylalanine 218. An N-linked (GlcNAc...) asparagine glycan is attached at asparagine 226. Helical transmembrane passes span valine 252–tryptophan 272 and histidine 288–phenylalanine 308. The N-linked (GlcNAc...) asparagine glycan is linked to asparagine 324. One can recognise an MIR 1 domain in the interval proline 342–alanine 397. 3 N-linked (GlcNAc...) asparagine glycosylation sites follow: asparagine 408, asparagine 453, and asparagine 462. MIR domains follow at residues isoleucine 412–methionine 468 and glutamate 474–asparagine 534. 4 helical membrane passes run threonine 615–isoleucine 635, phenylalanine 655–isoleucine 675, valine 679–glutamate 699, and leucine 718–phenylalanine 738.

The protein belongs to the glycosyltransferase 39 family. PMT1 and PMT2 form a functional heterodimer.

Its subcellular location is the endoplasmic reticulum membrane. It carries out the reaction a di-trans,poly-cis-dolichyl beta-D-mannosyl phosphate + L-seryl-[protein] = 3-O-(alpha-D-mannosyl)-L-seryl-[protein] + a di-trans,poly-cis-dolichyl phosphate + H(+). The catalysed reaction is a di-trans,poly-cis-dolichyl beta-D-mannosyl phosphate + L-threonyl-[protein] = 3-O-(alpha-D-mannosyl)-L-threonyl-[protein] + a di-trans,poly-cis-dolichyl phosphate + H(+). It functions in the pathway protein modification; protein glycosylation. Functionally, protein mannosyltransferase (PMT) involved in hyphal growth and drug sensitivity. Transfers mannose from Dol-P-mannose to Ser or Thr residues on proteins. PMT1, PMT2 and PMT4 account for most of the protein-O-glycosylation activity, while PMT5 and PMT6 may specifically modulate a much narrower spectrum of target proteins. Essential protein that plays an important role in virulence. The chain is Dolichyl-phosphate-mannose--protein mannosyltransferase 2 from Candida albicans (strain SC5314 / ATCC MYA-2876) (Yeast).